The sequence spans 292 residues: Tyrosine isonitrile desaturase (292 aa).

Fe cation contacts are provided by His-110, Asp-112, and His-259.

It belongs to the TfdA dioxygenase family. The cofactor is Fe(2+).

The catalysed reaction is (2S)-3-(4-hydroxyphenyl)-2-isocyanopropanoate + 2-oxoglutarate + O2 = (2E)-3-(4-hydroxyphenyl)-2-isocyanoprop-2-enoate + succinate + CO2 + H2O. Its function is as follows. Catalyzes the 2-oxoglutarate-dependent oxidation of tyrosine isonitrile. The polypeptide is Tyrosine isonitrile desaturase (Erwinia amylovora (strain CFBP1430)).